Reading from the N-terminus, the 90-residue chain is Putative UPF0401 protein YpjI (90 aa).

This sequence belongs to the UPF0401 family.

This chain is Putative UPF0401 protein YpjI (ypjI), found in Escherichia coli (strain K12).